The chain runs to 248 residues: Triosephosphate isomerase (248 aa).

Position 9–11 (9–11 (NWK)) interacts with substrate. The active-site Electrophile is His92. Glu164 (proton acceptor) is an active-site residue. Residues Gly170, Ser210, and 231 to 232 (GG) each bind substrate.

Belongs to the triosephosphate isomerase family. As to quaternary structure, homodimer.

The protein localises to the cytoplasm. The catalysed reaction is D-glyceraldehyde 3-phosphate = dihydroxyacetone phosphate. Its pathway is carbohydrate biosynthesis; gluconeogenesis. It participates in carbohydrate degradation; glycolysis; D-glyceraldehyde 3-phosphate from glycerone phosphate: step 1/1. Its function is as follows. Involved in the gluconeogenesis. Catalyzes stereospecifically the conversion of dihydroxyacetone phosphate (DHAP) to D-glyceraldehyde-3-phosphate (G3P). The chain is Triosephosphate isomerase from Mycoplasma capricolum subsp. capricolum (strain California kid / ATCC 27343 / NCTC 10154).